The following is a 465-amino-acid chain: Plasma alpha-L-fucosidase (465 aa).

The first 26 residues, M1–A26, serve as a signal peptide directing secretion. N-linked (GlcNAc...) asparagine glycans are attached at residues N169 and N237. Phosphoserine is present on S299. The N-linked (GlcNAc...) asparagine glycan is linked to N375.

It belongs to the glycosyl hydrolase 29 family. As to quaternary structure, homotetramer.

The protein localises to the secreted. It catalyses the reaction an alpha-L-fucoside + H2O = L-fucose + an alcohol. Its function is as follows. Alpha-L-fucosidase is responsible for hydrolyzing the alpha-1,6-linked fucose joined to the reducing-end N-acetylglucosamine of the carbohydrate moieties of glycoproteins. This is Plasma alpha-L-fucosidase (FUCA2) from Pongo abelii (Sumatran orangutan).